Reading from the N-terminus, the 306-residue chain is NAD kinase 1 (306 aa).

The Proton acceptor role is filled by aspartate 67. NAD(+) contacts are provided by residues 67-68 (DG), 149-150 (NE), and aspartate 181.

The protein belongs to the NAD kinase family. It depends on a divalent metal cation as a cofactor.

The protein resides in the cytoplasm. The catalysed reaction is NAD(+) + ATP = ADP + NADP(+) + H(+). Involved in the regulation of the intracellular balance of NAD and NADP, and is a key enzyme in the biosynthesis of NADP. Catalyzes specifically the phosphorylation on 2'-hydroxyl of the adenosine moiety of NAD to yield NADP. In Thermosynechococcus vestitus (strain NIES-2133 / IAM M-273 / BP-1), this protein is NAD kinase 1.